Consider the following 913-residue polypeptide: Striatin-interacting protein homolog (913 aa).

3 stretches are compositionally biased toward low complexity: residues 177–188 (QQQQQQQQNENE), 195–204 (TNFTTTTTTT), and 791–811 (NNNN…NNDN). Disordered stretches follow at residues 177-204 (QQQQ…TTTT) and 791-814 (NNNN…NGLT).

Belongs to the STRIP family.

This is Striatin-interacting protein homolog (fam40) from Dictyostelium discoideum (Social amoeba).